Reading from the N-terminus, the 109-residue chain is Cell division protein ZapA (109 aa).

Residues 21–99 (PEQRDALNQA…IEQALLEQGR (79 aa)) are a coiled coil.

It belongs to the ZapA family. Type 1 subfamily. Homodimer. Interacts with FtsZ.

The protein localises to the cytoplasm. Its function is as follows. Activator of cell division through the inhibition of FtsZ GTPase activity, therefore promoting FtsZ assembly into bundles of protofilaments necessary for the formation of the division Z ring. It is recruited early at mid-cell but it is not essential for cell division. The sequence is that of Cell division protein ZapA from Cronobacter sakazakii (strain ATCC BAA-894) (Enterobacter sakazakii).